The chain runs to 330 residues: Olfactory receptor 5P70 (330 aa).

The Extracellular portion of the chain corresponds to 1–28; it reads MAFLEDGNHTIVTEFILLGLTDDPVLRD. Asn-8 carries N-linked (GlcNAc...) asparagine glycosylation. The chain crosses the membrane as a helical span at residues 29–49; that stretch reads ILFTIILCIYLVTVSGNLSTI. Residues 50–57 are Cytoplasmic-facing; the sequence is LLIRVSSQ. A helical membrane pass occupies residues 58 to 78; the sequence is LHHPMYFFLSHLASVDIGISS. The Extracellular portion of the chain corresponds to 79–102; that stretch reads SVTPNMLANFLVKPNTISYIGCSI. Cys-100 and Cys-192 are disulfide-bonded. Residues 103–123 traverse the membrane as a helical segment; it reads QFTSAVFLATVECFLLAAMAY. Over 124–136 the chain is Cytoplasmic; sequence DRFVAICNPLLYS. Residues 137 to 157 traverse the membrane as a helical segment; the sequence is TKMSREACIQLVVGSYIQGLL. The Extracellular segment spans residues 158-199; the sequence is NASFFTLSFFSLIFCGPNRINHFYCDLAPLVELSCSDVTLAV. The helical transmembrane segment at 200 to 220 threads the bilayer; the sequence is VITSISAGFITLTTVFVIAIS. Over 221-240 the chain is Cytoplasmic; sequence YSCIFITIMKMHSTESRYKA. Residues 241 to 261 traverse the membrane as a helical segment; sequence FSTCTSHLTAVTLFYGTTMFI. The Extracellular segment spans residues 262 to 274; it reads YVMPKSSYSTDQN. A helical transmembrane segment spans residues 275 to 295; the sequence is KVLSVFYMVVIPMLNPLIYSL. Topologically, residues 296 to 330 are cytoplasmic; it reads RNNEIKGALKRYLGKKIFSYGNLFCKTHYNDTHQV.

The protein belongs to the G-protein coupled receptor 1 family.

It is found in the cell membrane. Functionally, potential odorant receptor. This is Olfactory receptor 5P70 from Mus musculus (Mouse).